A 373-amino-acid polypeptide reads, in one-letter code: Transcription factor SPATULA (373 aa).

A compositionally biased stretch (basic and acidic residues) spans 1 to 21; sequence MISQREEREEKKQRVMGDKKL. Disordered regions lie at residues 1–46 and 141–210; these read MISQ…PSSS and VQGN…KRRR. The segment covering 141–160 has biased composition (low complexity); it reads VQGNSSGTRVSSSSVGASGN. The segment covering 161–177 has biased composition (acidic residues); it reads ETDEYDCESEEGGEAVV. The span at 182 to 191 shows a compositional bias: low complexity; that stretch reads SSKSGPSSRS. Residues 197–210 show a composition bias toward basic and acidic residues; it reads RAAEVHNLSEKRRR. The 50-residue stretch at 197–246 folds into the bHLH domain; it reads RAAEVHNLSEKRRRSRINEKMKALQSLIPNSNKTDKASMLDEAIEYLKQL.

In terms of assembly, homodimer. Interacts with HEC1, HEC2 and HEC3. Binds to RGL2 and RGA. Expressed in lateral root caps, young leaves, stipules, maturing pith cells of the stem, differentiating vascular cells, shoot apical meristems and flowers.

Its subcellular location is the nucleus. Functionally, transcription factor that plays a role in floral organogenesis. Promotes the growth of carpel margins and of pollen tract tissues derived from them. This is Transcription factor SPATULA (SPT) from Arabidopsis thaliana (Mouse-ear cress).